The sequence spans 344 residues: MAP3K12-binding inhibitory protein 1 (344 aa).

Position 91 is a phosphoserine (serine 91). Glycyl lysine isopeptide (Lys-Gly) (interchain with G-Cter in SUMO2) cross-links involve residues lysine 94, lysine 118, lysine 129, lysine 139, lysine 153, and lysine 235. The segment at alanine 172 to proline 344 is interaction with MAP3K12. The interval isoleucine 271–leucine 285 is leucine-zipper 1. N6-acetyllysine; alternate is present on lysine 301. Lysine 301 participates in a covalent cross-link: Glycyl lysine isopeptide (Lys-Gly) (interchain with G-Cter in SUMO2); alternate. Glycyl lysine isopeptide (Lys-Gly) (interchain with G-Cter in SUMO2) cross-links involve residues lysine 304 and lysine 325. The leucine-zipper 2 stretch occupies residues leucine 314–leucine 329.

In terms of assembly, component of the ADA2A-containing complex (ATAC), composed of KAT14, KAT2A, TADA2L, TADA3L, ZZ3, MBIP, WDR5, YEATS2, CCDC101 and DR1. In the complex, it probably interacts directly with KAT2A, KAT14 and WDR5. Ubiquitous. High expression seen in the heart and lung.

It localises to the nucleus. Its subcellular location is the cytoplasm. In terms of biological role, inhibits the MAP3K12 activity to induce the activation of the JNK/SAPK pathway. Component of the ATAC complex, a complex with histone acetyltransferase activity on histones H3 and H4. The sequence is that of MAP3K12-binding inhibitory protein 1 (MBIP) from Homo sapiens (Human).